Reading from the N-terminus, the 295-residue chain is Aquaporin-9 (295 aa).

Residues 1-24 are Cytoplasmic-facing; that stretch reads MPSEKDGAKKSLMQRLALKSRIAK. Residues 25-43 traverse the membrane as a helical segment; the sequence is ETLSEFLGTFIMIVLGCSS. Residues 44-57 lie on the Extracellular side of the membrane; that stretch reads IAQAVLSRERFGGI. Residues 58-77 form a helical membrane-spanning segment; that stretch reads ITINIGFASAVVMALYVTFG. Residues 78-79 are Cytoplasmic-facing; sequence IS. Positions 80–92 form an intramembrane region, discontinuously helical; it reads GGHINPAVSFAMC. Residues 84–86 carry the NPA 1 motif; that stretch reads NPA. At 93 to 98 the chain is on the cytoplasmic side; it reads AFGRME. The chain crosses the membrane as a helical span at residues 99 to 123; the sequence is WFKFPFYVGAQFLGAFVGAATVFGI. Over 124 to 160 the chain is Extracellular; sequence YYDGLMAFAGGKLLVVGENATAFIFATYPAPFISTPG. The chain crosses the membrane as a helical span at residues 161–178; that stretch reads AFVDQVVSTMFLLLIVFA. At 179–190 the chain is on the cytoplasmic side; sequence MFDSRNLGVPRG. A helical membrane pass occupies residues 191-207; the sequence is LEPVVIGLLIIVLSCSL. The Extracellular segment spans residues 208 to 210; that stretch reads GLN. The segment at residues 211-225 is an intramembrane region (discontinuously helical); sequence SGCAMNPARDLSPRL. The short motif at 216–218 is the NPA 2 element; that stretch reads NPA. Residues 226 to 243 lie on the Extracellular side of the membrane; it reads FTALAGWGFEVFTVGNNF. A helical transmembrane segment spans residues 244-264; the sequence is WWIPVVGPMIGAFLGGLIYIL. Residues 265 to 295 lie on the Cytoplasmic side of the membrane; that stretch reads FIQMHHSKLDPDMKAEPSENNLEKHELSVIM.

Belongs to the MIP/aquaporin (TC 1.A.8) family. Homotetramer; each monomer provides an independent glycerol/water pore. As to expression, detected in testis and liver. Detected in immature spermatocytes and in interstitial Leydig cells.

It is found in the cell membrane. It localises to the basolateral cell membrane. The catalysed reaction is H2O(in) = H2O(out). It carries out the reaction glycerol(in) = glycerol(out). It catalyses the reaction urea(in) = urea(out). The enzyme catalyses (S)-lactate(in) = (S)-lactate(out). The catalysed reaction is NH4(+)(in) = NH4(+)(out). It carries out the reaction uracil(in) = uracil(out). It catalyses the reaction adenine(out) = adenine(in). The enzyme catalyses 3-hydroxybutanoate(in) = 3-hydroxybutanoate(out). The catalysed reaction is D-sorbitol(in) = D-sorbitol(out). It carries out the reaction D-mannitol(in) = D-mannitol(out). It catalyses the reaction H2O2(out) = H2O2(in). The enzyme catalyses arsenite(in) = arsenite(out). The catalysed reaction is selenite(in) = selenite(out). With respect to regulation, channel activity is inhibited by mercury ions and phloretin. Aquaglyceroporins form homotetrameric transmembrane channels, with each monomer independently mediating glycerol and water transport across the plasma membrane along their osmotic gradient. AQP9 is the primary route for glycerol uptake in hepatocytes, supporting hepatic gluconeogenesis. It exhibits broad specificity and may transport various small, non-charged solutes, including carbamides, polyols, purines, and pyrimidines. AQP9 may also facilitate hepatic urea extrusion. Due to its permeability to lactate, AQP9 might participate in the astrocyte-to-neuron lactate shuttle, supplying neurons with energy. Additionally, AQP9 is permeable to arsenite, contributing to arsenic excretion by the liver and providing partial protection against arsenic toxicity. It is also permeable to H2O2 in vivo. Could also be permeable to ammonium. The chain is Aquaporin-9 from Rattus norvegicus (Rat).